A 264-amino-acid polypeptide reads, in one-letter code: Phosphoinositide-3-kinase-interacting protein 1 (264 aa).

A signal peptide spans 1-21; that stretch reads MLLAWVHTFLLSNMLLAEAYG. Over 22-170 the chain is Extracellular; the sequence is SGGCFWDNGH…SKEKKDLGTL (149 aa). Positions 24–101 constitute a Kringle domain; sequence GCFWDNGHLY…EKRPCEDVSC (78 aa). 3 disulfide bridges follow: cysteine 25–cysteine 101, cysteine 46–cysteine 82, and cysteine 70–cysteine 96. Positions 94–129 are disordered; sequence RPCEDVSCPETTSQAPPPSSAMELEEKSGAPGDKEA. Positions 117 to 129 are enriched in basic and acidic residues; it reads LEEKSGAPGDKEA. Residues 171-191 form a helical membrane-spanning segment; sequence GYVLGITMMVIILAIGAGIIV. The Cytoplasmic portion of the chain corresponds to 192–264; the sequence is GYTYKRGKDL…LTGQAGTPGA (73 aa).

The protein resides in the cell membrane. Its function is as follows. Negative regulator of hepatic phosphatidylinositol 3-kinase (PI3K) activity. In Mus musculus (Mouse), this protein is Phosphoinositide-3-kinase-interacting protein 1 (Pik3ip1).